The chain runs to 620 residues: MSPQRDRTNAFYKDNPHPKGSRIVINREHLMIDRPYVLLAILFVMFLSLIGLLAIAGIRLHQAAIHTAEIHKSLSTNLDVTNSIEHQVKDVLTPLFKIIGDEVGLRTPQRFTDLVKFISDKIKFLNPDREYDFRDLNWCINPPERIKLDYDQYCADVAAEELMNALVNSTLLETRTTNQFLAVSKGNCSGPTTIRGQFSNMSTSLLDLYLSRGYNVSSIVTMTSQGMYGGTYLVEKPNLSSKRSELSQLSMYRVFEVGVIRNPGLGAPVFHMTNYFEQPVSNDLSNCMVALGEFKLAALCHREDSITIPYQGSGKGVSFQLVNLGVWKSPTDMQSWIPLSTDDPVIDRLYLSSHRGVIADNQAKWAVPTTRTDDKLRMETCFQQACKGKIQALCENPEWAPLKDNRIPSYGVLSVDLSPTVELKIKIASGFGPLITHGSGMDLYKSNHNNVYWLTIPPMKNLALGVINTLEWIPRFKVSPNLFTVPIKEAGKDCHAPTYLPAEVDGDVKLSSNLVILPGQDLQYVLATYDTSRVEHAVVYYVYSPGRSFSYFYPFRLPIRGVPIELQVECFTWDQKLWCRHFCVLANSESGGHITHSGMVGMGVSCTVTREDGTNRRQSC.

Residues 1–37 (MSPQRDRTNAFYKDNPHPKGSRIVINREHLMIDRPYV) lie on the Intravirion side of the membrane. Positions 1-154 (MSPQRDRTNA…RIKLDYDQYC (154 aa)) are stalk. The helical; Signal-anchor for type II membrane protein transmembrane segment at 38–58 (LLAILFVMFLSLIGLLAIAGI) threads the bilayer. Over 59 to 620 (RLHQAAIHTA…EDGTNRRQSC (562 aa)) the chain is Virion surface. N-linked (GlcNAc...) asparagine; by host glycosylation is found at Asn168, Asn187, Asn200, Asn215, and Asn238. Cystine bridges form between Cys188/Cys606, Cys287/Cys300, Cys381/Cys494, Cys386/Cys394, and Cys570/Cys579. The tract at residues 458-543 (PMKNLALGVI…VEHAVVYYVY (86 aa)) is interaction with host NECTIN4 receptor.

The protein belongs to the paramyxoviruses hemagglutinin-neuraminidase family. Non-sialidase subfamily. Homodimer; disulfide-linked. Further forms homotetramer (dimer of dimers). Interacts (via C-terminus) with human NECTIN4 (via N-terminus); this interaction allows attachment to the respiratory epithelium and viral entry. Interacts (via C-terminus) with human SLAMF1/CD150 (via N-terminus); this interaction allows attachment and viral entry into the CD150-expressing immune cells.

It is found in the virion membrane. The protein localises to the host cell membrane. Attaches the virus to the human SLAMF1/CD150 receptor for entry into host dendritic cells, macrophages, activated memory T cells and naive or memory B cells, thereby explaining the long immunosuppression that follows infection. In the respiratory airways, binds to the NECTIN4 receptor for entry into the host cell. Binding of H protein to the receptor induces a conformational change that allows the F protein to trigger virion/cell membranes fusion. The sequence is that of Hemagglutinin glycoprotein (H) from Homo sapiens (Human).